Consider the following 269-residue polypeptide: Myelin protein zero-like protein 1 (269 aa).

Positions 1–35 are cleaved as a signal peptide; sequence MAAPAGAGALIASPDRRRCLWSVLAAALGLLTYGV. The Ig-like V-type domain occupies 36-146; the sequence is SALEVYTPKE…VKNPPDIVVQ (111 aa). The Extracellular segment spans residues 36–162; that stretch reads SALEVYTPKE…YVVEKEILPA (127 aa). N50, N64, and N130 each carry an N-linked (GlcNAc...) asparagine glycan. A disulfide bridge links C58 with C135. Residues 163 to 183 form a helical membrane-spanning segment; sequence FPVWVVVGIVTAVVLGLTLLI. The Cytoplasmic portion of the chain corresponds to 184–269; that stretch reads TMILAVIYRR…SVVYADIRKN (86 aa). Residues 202–238 form a disordered region; sequence GCNTSENVSPVKQVSRKSPSDTEGLVKSLPSGSHQGP. The segment covering 203-213 has biased composition (polar residues); the sequence is CNTSENVSPVK. Phosphoserine is present on residues S206, S210, S219, and S221. Residues 239–244 carry the ITIM motif 1 motif; sequence VIYAQL. At Y241 the chain carries Phosphotyrosine. S260 bears the Phosphoserine mark. The short motif at 261–266 is the ITIM motif 2 element; the sequence is VVYADI. Phosphotyrosine is present on Y263.

The protein belongs to the myelin P0 protein family. In terms of assembly, interacts with phosphorylated PTPN11/SHP-2. Post-translationally, phosphorylated on tyrosine residues upon stimulation with pervanadate and concanavalin-A (ConA). Phosphorylation at Tyr-241 and Tyr-263 is required for interaction with PTPN11/SHP-2. Dephosphorylated by PTPN11/SHP-2 (in vitro). In terms of processing, N-glycosylated.

Its subcellular location is the membrane. In terms of biological role, cell surface receptor, which is involved in signal transduction processes. Recruits PTPN11/SHP-2 to the cell membrane and is a putative substrate of PTPN11/SHP-2. Is a major receptor for concanavalin-A (ConA) and is involved in cellular signaling induced by ConA, which probably includes Src family tyrosine-protein kinases. May be involved in regulation of integrin-mediated cell motility. In Bos taurus (Bovine), this protein is Myelin protein zero-like protein 1 (MPZL1).